We begin with the raw amino-acid sequence, 129 residues long: Putative membrane protein insertion efficiency factor (129 aa).

Belongs to the UPF0161 family.

The protein localises to the cell inner membrane. In terms of biological role, could be involved in insertion of integral membrane proteins into the membrane. In Rhodopseudomonas palustris (strain ATCC BAA-98 / CGA009), this protein is Putative membrane protein insertion efficiency factor.